A 336-amino-acid chain; its full sequence is Inositol 2-dehydrogenase (336 aa).

This sequence belongs to the Gfo/Idh/MocA family. In terms of assembly, homotetramer.

It catalyses the reaction myo-inositol + NAD(+) = scyllo-inosose + NADH + H(+). Its function is as follows. Involved in the oxidation of myo-inositol (MI) to 2-keto-myo-inositol (2KMI or 2-inosose). This Pseudomonas syringae pv. syringae (strain B728a) protein is Inositol 2-dehydrogenase.